The primary structure comprises 224 residues: UPF0758 protein Hhal_2301 (224 aa).

The MPN domain maps to Thr-102–Leu-224. Zn(2+)-binding residues include His-173, His-175, and Asp-186. Positions His-173–Asp-186 match the JAMM motif motif.

Belongs to the UPF0758 family.

In Halorhodospira halophila (strain DSM 244 / SL1) (Ectothiorhodospira halophila (strain DSM 244 / SL1)), this protein is UPF0758 protein Hhal_2301.